The following is a 167-amino-acid chain: Ureidoglycolate lyase (167 aa).

The protein belongs to the ureidoglycolate lyase family. In terms of assembly, homodimer. Ni(2+) is required as a cofactor.

It carries out the reaction (S)-ureidoglycolate = urea + glyoxylate. The protein operates within nitrogen metabolism; (S)-allantoin degradation. Functionally, catalyzes the catabolism of the allantoin degradation intermediate (S)-ureidoglycolate, generating urea and glyoxylate. Involved in the utilization of allantoin as nitrogen source. The protein is Ureidoglycolate lyase of Pseudomonas fluorescens (strain Pf0-1).